We begin with the raw amino-acid sequence, 864 residues long: Translation initiation factor IF-2 (864 aa).

The span at 140-171 (DSRSLNTKKENKLKISNKDEQNKKFNQHRESN) shows a compositional bias: basic and acidic residues. Residues 140-179 (DSRSLNTKKENKLKISNKDEQNKKFNQHRESNSFDLNHKK) are disordered. Residues 364–533 (IRAPVVTIMG…LLQAEMLELK (170 aa)) enclose the tr-type G domain. The interval 373–380 (GHVDHGKT) is G1. 373–380 (GHVDHGKT) is a GTP binding site. The tract at residues 398–402 (GITQN) is G2. The G3 stretch occupies residues 419-422 (DTPG). GTP contacts are provided by residues 419–423 (DTPGH) and 473–476 (NKID). The interval 473–476 (NKID) is G4. Residues 509 to 511 (SAK) form a G5 region.

Belongs to the TRAFAC class translation factor GTPase superfamily. Classic translation factor GTPase family. IF-2 subfamily.

The protein localises to the cytoplasm. Functionally, one of the essential components for the initiation of protein synthesis. Protects formylmethionyl-tRNA from spontaneous hydrolysis and promotes its binding to the 30S ribosomal subunits. Also involved in the hydrolysis of GTP during the formation of the 70S ribosomal complex. The polypeptide is Translation initiation factor IF-2 (Buchnera aphidicola subsp. Acyrthosiphon pisum (strain Tuc7)).